Reading from the N-terminus, the 258-residue chain is Phosphosulfolactate synthase (258 aa).

The protein belongs to the phosphosulfolactate synthase family.

It catalyses the reaction (2R)-O-phospho-3-sulfolactate = phosphoenolpyruvate + sulfite + H(+). Its pathway is cofactor biosynthesis; coenzyme M biosynthesis; sulfoacetaldehyde from phosphoenolpyruvate and sulfite: step 1/4. In terms of biological role, catalyzes the addition of sulfite to phosphoenolpyruvate (PEP) to yield (2R)-phospho-3-sulfolactate (PSL). The polypeptide is Phosphosulfolactate synthase (comA) (Methanothermobacter thermautotrophicus (strain ATCC 29096 / DSM 1053 / JCM 10044 / NBRC 100330 / Delta H) (Methanobacterium thermoautotrophicum)).